A 374-amino-acid polypeptide reads, in one-letter code: MIDPWDVEEVDYERLTEEFGIRPIDEKVRELLPRRFPLLDRGIVFGHRDYDSFLKDYNDGKLVSVLSGMMPSGRMHLGHKTVVDQLVFYQQEMDVKVYVPIADLEAHHARNMDLDRAHRIAVEEYVLNYAALGLDLDPDRCEIYLQSERKTVQRMALLLAGRLTWNTVKNTYGFTGETNMGHAFAPIVQAADILHPQEIEGPHRVLVPVGVDQDPHLRLTRDIAEKEDLIKPASTYHRFMTGLTGGKMSSSKPNTAIFLTDDPETAKEKVWNAKTGGGATLEEHREHGGNPDECVVYELMVYHLADRIGGDEKLREIRKKCREGDIICGECKRMVGEALAEILEELERRREDVRDELPDLLSQHPDAPEVPEDW.

Positions 71-79 match the 'HIGH' region motif; that stretch reads PSGRMHLGH. The short motif at 247-251 is the 'KMSKS' region element; that stretch reads KMSSS.

The protein belongs to the class-I aminoacyl-tRNA synthetase family.

It is found in the cytoplasm. The catalysed reaction is tRNA(Trp) + L-tryptophan + ATP = L-tryptophyl-tRNA(Trp) + AMP + diphosphate + H(+). The protein is Tryptophan--tRNA ligase of Methanopyrus kandleri (strain AV19 / DSM 6324 / JCM 9639 / NBRC 100938).